A 110-amino-acid chain; its full sequence is Small ribosomal subunit protein uS10 (110 aa).

Belongs to the universal ribosomal protein uS10 family. In terms of assembly, part of the 30S ribosomal subunit.

Its function is as follows. Involved in the binding of tRNA to the ribosomes. This is Small ribosomal subunit protein uS10 from Coxiella burnetii (strain Dugway 5J108-111).